We begin with the raw amino-acid sequence, 288 residues long: Putative hydrolase LipZ (288 aa).

This sequence belongs to the AB hydrolase superfamily.

The protein is Putative hydrolase LipZ of Mycobacterium tuberculosis (strain CDC 1551 / Oshkosh).